The chain runs to 338 residues: Lipoyl synthase (338 aa).

The segment at 1–22 (MTTVQEAVPNLIPTQDVTPRPA) is disordered. [4Fe-4S] cluster-binding residues include Cys-84, Cys-89, Cys-95, Cys-110, Cys-114, Cys-117, and Ser-324. The region spanning 96–313 (FSGGTATFMI…AEEGYKMGFK (218 aa)) is the Radical SAM core domain.

This sequence belongs to the radical SAM superfamily. Lipoyl synthase family. Requires [4Fe-4S] cluster as cofactor.

The protein localises to the cytoplasm. The catalysed reaction is [[Fe-S] cluster scaffold protein carrying a second [4Fe-4S](2+) cluster] + N(6)-octanoyl-L-lysyl-[protein] + 2 oxidized [2Fe-2S]-[ferredoxin] + 2 S-adenosyl-L-methionine + 4 H(+) = [[Fe-S] cluster scaffold protein] + N(6)-[(R)-dihydrolipoyl]-L-lysyl-[protein] + 4 Fe(3+) + 2 hydrogen sulfide + 2 5'-deoxyadenosine + 2 L-methionine + 2 reduced [2Fe-2S]-[ferredoxin]. Its pathway is protein modification; protein lipoylation via endogenous pathway; protein N(6)-(lipoyl)lysine from octanoyl-[acyl-carrier-protein]: step 2/2. Catalyzes the radical-mediated insertion of two sulfur atoms into the C-6 and C-8 positions of the octanoyl moiety bound to the lipoyl domains of lipoate-dependent enzymes, thereby converting the octanoylated domains into lipoylated derivatives. This is Lipoyl synthase from Pseudomonas entomophila (strain L48).